Here is a 481-residue protein sequence, read N- to C-terminus: Glutamyl-tRNA(Gln) amidotransferase subunit A (481 aa).

Active-site charge relay system residues include Lys-77 and Ser-151. The Acyl-ester intermediate role is filled by Ser-175.

This sequence belongs to the amidase family. GatA subfamily. Heterotrimer of A, B and C subunits.

It catalyses the reaction L-glutamyl-tRNA(Gln) + L-glutamine + ATP + H2O = L-glutaminyl-tRNA(Gln) + L-glutamate + ADP + phosphate + H(+). Its function is as follows. Allows the formation of correctly charged Gln-tRNA(Gln) through the transamidation of misacylated Glu-tRNA(Gln) in organisms which lack glutaminyl-tRNA synthetase. The reaction takes place in the presence of glutamine and ATP through an activated gamma-phospho-Glu-tRNA(Gln). The chain is Glutamyl-tRNA(Gln) amidotransferase subunit A from Rubrobacter xylanophilus (strain DSM 9941 / JCM 11954 / NBRC 16129 / PRD-1).